A 451-amino-acid chain; its full sequence is Exodeoxyribonuclease 7 large subunit (451 aa).

It belongs to the XseA family. As to quaternary structure, heterooligomer composed of large and small subunits.

The protein localises to the cytoplasm. It carries out the reaction Exonucleolytic cleavage in either 5'- to 3'- or 3'- to 5'-direction to yield nucleoside 5'-phosphates.. In terms of biological role, bidirectionally degrades single-stranded DNA into large acid-insoluble oligonucleotides, which are then degraded further into small acid-soluble oligonucleotides. The chain is Exodeoxyribonuclease 7 large subunit from Neisseria meningitidis serogroup B (strain ATCC BAA-335 / MC58).